The chain runs to 825 residues: Translation initiation factor IF-2 (825 aa).

Basic and acidic residues-rich tracts occupy residues 1–19 (MTKK…DNKK), 35–45 (RKGEKKTEGKR), 70–98 (LLKD…EYKK), and 113–122 (KKVESVEKPA). The segment at 1–239 (MTKKQENETS…TQRKDRPLPE (239 aa)) is disordered. The span at 158 to 169 (PSSSRRPSSRPS) shows a compositional bias: low complexity. Over residues 181 to 191 (GRRRKSGKPGR) the composition is skewed to basic residues. The span at 194–208 (QNSYADQGRGANSNR) shows a compositional bias: polar residues. Over residues 211 to 220 (QRKRKNKKHQ) the composition is skewed to basic residues. The tr-type G domain occupies 326-495 (VRPPVVTIMG…ILEADMLELK (170 aa)). A G1 region spans residues 335 to 342 (GHVDHGKT). Residue 335-342 (GHVDHGKT) coordinates GTP. The G2 stretch occupies residues 360–364 (GITQN). A G3 region spans residues 381–384 (DTPG). GTP-binding positions include 381 to 385 (DTPGH) and 435 to 438 (NKMD). Residues 435-438 (NKMD) are G4. The segment at 471–473 (SAK) is G5.

The protein belongs to the TRAFAC class translation factor GTPase superfamily. Classic translation factor GTPase family. IF-2 subfamily.

It is found in the cytoplasm. Its function is as follows. One of the essential components for the initiation of protein synthesis. Protects formylmethionyl-tRNA from spontaneous hydrolysis and promotes its binding to the 30S ribosomal subunits. Also involved in the hydrolysis of GTP during the formation of the 70S ribosomal complex. The protein is Translation initiation factor IF-2 of Lactobacillus delbrueckii subsp. bulgaricus (strain ATCC BAA-365 / Lb-18).